Here is a 542-residue protein sequence, read N- to C-terminus: Chaperonin GroEL 1 (542 aa).

ATP is bound by residues 30–33 (TLGP), Lys51, 87–91 (DGTTT), Gly415, 480–482 (NAA), and Asp496.

Belongs to the chaperonin (HSP60) family. In terms of assembly, forms a cylinder of 14 subunits composed of two heptameric rings stacked back-to-back. Interacts with the co-chaperonin GroES.

Its subcellular location is the cytoplasm. The catalysed reaction is ATP + H2O + a folded polypeptide = ADP + phosphate + an unfolded polypeptide.. Its function is as follows. Together with its co-chaperonin GroES, plays an essential role in assisting protein folding. The GroEL-GroES system forms a nano-cage that allows encapsulation of the non-native substrate proteins and provides a physical environment optimized to promote and accelerate protein folding. In Nitrobacter winogradskyi (strain ATCC 25391 / DSM 10237 / CIP 104748 / NCIMB 11846 / Nb-255), this protein is Chaperonin GroEL 1.